The sequence spans 952 residues: Leucine--tRNA ligase (952 aa).

The short motif at 48-58 is the 'HIGH' region element; that stretch reads PYLNGVLHAGH. The short motif at 644 to 648 is the 'KMSKS' region element; that stretch reads KLSKS. Lysine 647 contacts ATP.

This sequence belongs to the class-I aminoacyl-tRNA synthetase family.

The protein resides in the cytoplasm. It carries out the reaction tRNA(Leu) + L-leucine + ATP = L-leucyl-tRNA(Leu) + AMP + diphosphate. The chain is Leucine--tRNA ligase from Methanococcus vannielii (strain ATCC 35089 / DSM 1224 / JCM 13029 / OCM 148 / SB).